The sequence spans 463 residues: Type II NADH:quinone oxidoreductase Ndh (463 aa).

Residues 21 to 25 and Val89 contribute to the FAD site; that span reads GSGFG. Glu184 is an active-site residue. FAD is bound by residues Asp322 and 333–334; that span reads AQ. Residues 387–407 form a helical membrane-spanning segment; that stretch reads FSGFIAWLIWLVLHLAYLIGF.

Belongs to the NADH dehydrogenase family. It depends on FAD as a cofactor.

Its subcellular location is the cell inner membrane. It carries out the reaction a quinone + NADH + H(+) = a quinol + NAD(+). The enzyme catalyses a menaquinone + NADH + H(+) = a menaquinol + NAD(+). The catalysed reaction is a ubiquinone + NADH + H(+) = a ubiquinol + NAD(+). Its activity is regulated as follows. Inhibited by phenothiazine analogs. Inhibited by 2-mercapto-quinazolinones. Not inhibited by classic inhibitors of type I NADH dehydrogenase, such as rotenone, piericidin A and pyridaben. Alternative, nonproton pumping NADH:quinone oxidoreductase that delivers electrons to the respiratory chain by oxidation of NADH and reduction of quinones. Ndh is probably the main NADH dehydrogenase of M.tuberculosis. The polypeptide is Type II NADH:quinone oxidoreductase Ndh (Mycobacterium tuberculosis (strain ATCC 25618 / H37Rv)).